The following is a 217-amino-acid chain: Phosphoribosylformylglycinamidine synthase subunit PurQ (217 aa).

Residues 2-217 (SIGVLVFPGS…GRVLLQGLLS (216 aa)) enclose the Glutamine amidotransferase type-1 domain. C86 functions as the Nucleophile in the catalytic mechanism. Residues H194 and E196 contribute to the active site.

As to quaternary structure, part of the FGAM synthase complex composed of 1 PurL, 1 PurQ and 2 PurS subunits.

The protein localises to the cytoplasm. It carries out the reaction N(2)-formyl-N(1)-(5-phospho-beta-D-ribosyl)glycinamide + L-glutamine + ATP + H2O = 2-formamido-N(1)-(5-O-phospho-beta-D-ribosyl)acetamidine + L-glutamate + ADP + phosphate + H(+). It catalyses the reaction L-glutamine + H2O = L-glutamate + NH4(+). Its pathway is purine metabolism; IMP biosynthesis via de novo pathway; 5-amino-1-(5-phospho-D-ribosyl)imidazole from N(2)-formyl-N(1)-(5-phospho-D-ribosyl)glycinamide: step 1/2. Part of the phosphoribosylformylglycinamidine synthase complex involved in the purines biosynthetic pathway. Catalyzes the ATP-dependent conversion of formylglycinamide ribonucleotide (FGAR) and glutamine to yield formylglycinamidine ribonucleotide (FGAM) and glutamate. The FGAM synthase complex is composed of three subunits. PurQ produces an ammonia molecule by converting glutamine to glutamate. PurL transfers the ammonia molecule to FGAR to form FGAM in an ATP-dependent manner. PurS interacts with PurQ and PurL and is thought to assist in the transfer of the ammonia molecule from PurQ to PurL. The polypeptide is Phosphoribosylformylglycinamidine synthase subunit PurQ (Parasynechococcus marenigrum (strain WH8102)).